The primary structure comprises 274 residues: MTPEQSPLGKASTYTEQYDASLLFPIARKNAREAIGIGAQLPFFGTDIWNAYELSWLNARGKPQIAVATFFVPADSPNIVESKSFKLYLGSFAQTAFESMDAVRDTIRRDVSASCGATVSVHLTAPYKFGKLQMEEFEGLSLDRLDLDTDVYQPDASLLKAALHEAPVEETVFSNLLKSNCPVTGQPDWGSVQIHYVGPQIDHAGLLRYIISYRNHTGFHEQCVERIFVDVLKACKPVKLAVYARYTRRGGLDINPFRTNYNLPMPDNMRLARQ.

Substrate is bound at residue 80–82; sequence VES. 82–83 provides a ligand contact to NADPH; that stretch reads SK. The active-site Thioimide intermediate is Cys-181. The Proton donor role is filled by Asp-188. 220–221 provides a ligand contact to substrate; the sequence is HE. 249–250 provides a ligand contact to NADPH; it reads RG.

Belongs to the GTP cyclohydrolase I family. QueF type 2 subfamily. In terms of assembly, homodimer.

It localises to the cytoplasm. It catalyses the reaction 7-aminomethyl-7-carbaguanine + 2 NADP(+) = 7-cyano-7-deazaguanine + 2 NADPH + 3 H(+). It functions in the pathway tRNA modification; tRNA-queuosine biosynthesis. Catalyzes the NADPH-dependent reduction of 7-cyano-7-deazaguanine (preQ0) to 7-aminomethyl-7-deazaguanine (preQ1). In Paraburkholderia xenovorans (strain LB400), this protein is NADPH-dependent 7-cyano-7-deazaguanine reductase.